The following is a 366-amino-acid chain: Peptide chain release factor 2 (366 aa).

N5-methylglutamine is present on glutamine 251.

The protein belongs to the prokaryotic/mitochondrial release factor family. In terms of processing, methylated by PrmC. Methylation increases the termination efficiency of RF2.

The protein localises to the cytoplasm. Its function is as follows. Peptide chain release factor 2 directs the termination of translation in response to the peptide chain termination codons UGA and UAA. The chain is Peptide chain release factor 2 (prfB) from Listeria monocytogenes serovar 1/2a (strain ATCC BAA-679 / EGD-e).